The chain runs to 691 residues: Methionine--tRNA ligase (691 aa).

The 'HIGH' region motif lies at 12-22; sequence PYANGSFHIGH. The Zn(2+) site is built by cysteine 143, cysteine 146, cysteine 156, and cysteine 159. Residues 341–345 carry the 'KMSKS' region motif; sequence KMSKS. Lysine 344 contributes to the ATP binding site. A tRNA-binding domain is found at 585–691; the sequence is DFVKVDLRIA…PGAQPGMRIH (107 aa).

The protein belongs to the class-I aminoacyl-tRNA synthetase family. MetG type 1 subfamily. In terms of assembly, homodimer. The cofactor is Zn(2+).

The protein localises to the cytoplasm. The catalysed reaction is tRNA(Met) + L-methionine + ATP = L-methionyl-tRNA(Met) + AMP + diphosphate. Its function is as follows. Is required not only for elongation of protein synthesis but also for the initiation of all mRNA translation through initiator tRNA(fMet) aminoacylation. The protein is Methionine--tRNA ligase of Bordetella avium (strain 197N).